The following is a 377-amino-acid chain: GTP 3',8-cyclase (377 aa).

The interval 1–29 (MTTRLYLSPTPPRNDREGASKSTSASIKH) is disordered. One can recognise a Radical SAM core domain in the interval 45 to 271 (RFGRIARDLR…FTLSPAKEPR (227 aa)). Arg-54 lines the GTP pocket. [4Fe-4S] cluster contacts are provided by Cys-61 and Cys-65. Tyr-67 is a binding site for S-adenosyl-L-methionine. Cys-68 is a [4Fe-4S] cluster binding site. Arg-105 is a binding site for GTP. Position 109 (Gly-109) interacts with S-adenosyl-L-methionine. Thr-140 is a binding site for GTP. S-adenosyl-L-methionine is bound at residue Ser-164. Residue Lys-201 coordinates GTP. Residue Met-235 coordinates S-adenosyl-L-methionine. [4Fe-4S] cluster contacts are provided by Cys-304 and Cys-307. 309-311 (RSR) is a binding site for GTP. Cys-321 contacts [4Fe-4S] cluster.

Belongs to the radical SAM superfamily. MoaA family. In terms of assembly, monomer and homodimer. It depends on [4Fe-4S] cluster as a cofactor.

It catalyses the reaction GTP + AH2 + S-adenosyl-L-methionine = (8S)-3',8-cyclo-7,8-dihydroguanosine 5'-triphosphate + 5'-deoxyadenosine + L-methionine + A + H(+). It functions in the pathway cofactor biosynthesis; molybdopterin biosynthesis. Functionally, catalyzes the cyclization of GTP to (8S)-3',8-cyclo-7,8-dihydroguanosine 5'-triphosphate. The protein is GTP 3',8-cyclase of Corynebacterium glutamicum (strain R).